Here is a 138-residue protein sequence, read N- to C-terminus: Large ribosomal subunit protein uL16c (138 aa).

The protein belongs to the universal ribosomal protein uL16 family. In terms of assembly, part of the 50S ribosomal subunit.

The protein resides in the plastid. It localises to the chloroplast. The protein is Large ribosomal subunit protein uL16c of Tetradesmus obliquus (Green alga).